The sequence spans 1091 residues: Protein CTR9 homolog (1091 aa).

N-acetylalanine is present on Ala2. 16 TPR repeats span residues 90 to 127 (GAYYSYLGKTETKNREKEEQFISATRYYNKASRIDMHE), 128 to 161 (PSTWVGKGQLLLAKGEIDNALQAFKIVLDTAPDN), 163 to 195 (PALLGQASVEFNRGRFSESLQLYKRALQVFPGC), 197 to 230 (AAVRLGIGLCRYKLGQLDKARQAFDRVLQLDPDN), 232 to 267 (EALVALGIMDLQANDSIGMRKGMDRMQQAFEIYPYC), 305 to 338 (SHSFYNLARSYHSKGDFEKAGMYYMAAIKETNNN), 343 to 376 (VFPYFGLGQVQLKLGELKGSVFNFEKVLEVYPDN), 377 to 410 (CETLKALGHLYTQLGQNEKALEYMRKATKLDPRD), 412 to 443 (QAFVGLGELLISSDTGAALDAFKMARTLMKKG), 449 to 482 (IEVLNDIGALHFEREEFESALENFKEALGDGIWI), 558 to 591 (IDAYLRLAASAKAQNNLPLAIELVNEALKVDDKN), 593 to 625 (NALSLLGELELKNDDWVKAKETFRAANDATDGK), 640 to 673 (AAMRNEKRNPKLEATHLEKAKELYTKVLTQHNSN), 674 to 707 (MYAANGSGIVLAEKGQFDIAKDVFTQVQEAASGS), 713 to 746 (PDVWVNLAHVYFAQGNFALTVKMYQNCLRKFFYN), and 749 to 782 (SQILLYLARTHYEAEQWQECKKTLLRAIHLTPSN). The segment at 919 to 1091 (FQRIKEQWKS…EEEEEEEEAN (173 aa)) is disordered. Basic residues predominate over residues 951–965 (ERRRKKGGKRRKKDK). Composition is skewed to acidic residues over residues 974–993 (DDEEEAATMDDHNEVEDEDA), 1003–1016 (MTTQEAEEPVDDDA), 1026–1035 (EDPDVDDDEV), and 1080–1091 (NMEEEEEEEEAN).

In terms of assembly, component of the nuclear PAF1 complex (PAF1C), which consists of VIP2/ELF7/PAF1, VIP3/SKI8/WDR61, VIP4/LEO1, VIP5/RTF1, VIP6/ELF8/CTR9 and CDC73. Interacts with VIP3 and VIP4. Expressed in roots, leaves and shoot apex.

The protein localises to the nucleus. Its function is as follows. Component of the PAF1 complex (PAF1C) which is involved in histone modifications such as methylation on histone H3 'Lys-4' (H3K4me3). Involved in regulation of flowering time. Required for the expression of the MADS box genes and flowering repressors FLC, AGL27/FLM and AGL31/MAF2. Required for histone H3 trimethylation on 'Lys-4' H3K4me3 at the FLC and AGL27/FLM loci. Involved in the control of seed dormancy and germination. The protein is Protein CTR9 homolog of Arabidopsis thaliana (Mouse-ear cress).